Consider the following 371-residue polypeptide: Gamma-tocopherol methyltransferase, chloroplastic (371 aa).

The N-terminal 65 residues, M1–Q65, are a transit peptide targeting the chloroplast. The SAM motif I stretch occupies residues I153–G162. An SAM motif II region spans residues G216–M224. Residues V243–I252 are SAM motif III.

It belongs to the class I-like SAM-binding methyltransferase superfamily. gTMT family. In terms of assembly, homodimer.

Its subcellular location is the plastid. It localises to the chloroplast inner membrane. It catalyses the reaction picrinine + S-adenosyl-L-methionine = ervincine + S-adenosyl-L-homocysteine + H(+). It functions in the pathway alkaloid biosynthesis; vindoline biosynthesis. S-adenosyl-L-methionine-dependent N-methyltransferase involved in the biosynthesis of biologically active monoterpenoid indole alkaloids (MIAs) natural products including vindoline. Inactive with picrinine as substrate. The sequence is that of Gamma-tocopherol methyltransferase, chloroplastic from Catharanthus roseus (Madagascar periwinkle).